Here is a 432-residue protein sequence, read N- to C-terminus: MQVSVETTQGLGRRVTITIAADSIETAVKSELVNVAKKVRIDGFRKGKVPMNIVAQRYGASVRQDVLGDLMSRNFVDAIIKEKINPAGAPNYVPGEYKVGEDFTYSVEFEVYPEVELTGLESIEVEKPVVEVTDADVDVMLDTLRKQQATWKEKDGAADAEDRVTIDFTGSVDGEEFEGGKATDFVLAMGQGRMIPGFEDGVKGHKAGEEFTIDVTFPEEYHAENLKGKAAKFVINLKKVEERGLPELTEEFIKRFGVEDGSVAGLRAEVRKNMERELKGAVRNRVKSQAIEGLVKANDIDVPAALIDSEIDVLRRQAAQRFGGNEKQALELPRELFEEQAKRRVVVGLLLGEVIRTNELKADEERVKGLIEEMASAYEDPKEVIEFYSKNKELMDNMRNVALEEQAVEAVLAKAKVSEKATSFNELMNQQA.

The PPIase FKBP-type domain occupies 161 to 246 (EDRVTIDFTG…LKKVEERGLP (86 aa)).

It belongs to the FKBP-type PPIase family. Tig subfamily.

The protein resides in the cytoplasm. It carries out the reaction [protein]-peptidylproline (omega=180) = [protein]-peptidylproline (omega=0). Involved in protein export. Acts as a chaperone by maintaining the newly synthesized protein in an open conformation. Functions as a peptidyl-prolyl cis-trans isomerase. The chain is Trigger factor from Salmonella choleraesuis (strain SC-B67).